The following is a 931-amino-acid chain: Dual O-methyltransferase/FAD-dependent monooxygenase elcB (931 aa).

Residues 1 to 463 (MAASTGLSTV…TTDKARPNGD (463 aa)) form an O-methyltransferase region. Asp-254 is a binding site for S-adenosyl-L-methionine. His-304 (proton acceptor) is an active-site residue. Positions 455–474 (TDKARPNGDTTHSGQASIPN) are disordered. Polar residues predominate over residues 462 to 474 (GDTTHSGQASIPN). An FAD-dependent monooxygenase region spans residues 464–931 (TTHSGQASIP…TFEELDVAEL (468 aa)). Residues Glu-520, Arg-604, Asp-836, and Ala-849 each contribute to the FAD site.

The protein in the C-terminal section; belongs to the paxM FAD-dependent monooxygenase family. In the N-terminal section; belongs to the class I-like SAM-binding methyltransferase superfamily. Cation-independent O-methyltransferase family. COMT subfamily.

The catalysed reaction is nor-toralactone + S-adenosyl-L-methionine = toralactone + S-adenosyl-L-homocysteine + H(+). It catalyses the reaction toralactone + NADH + O2 + H(+) = 1-(3,4,5-trihydroxy-7-methoxynaphthalen-2-yl)propan-2-one + CO2 + NAD(+). It participates in secondary metabolite biosynthesis. Functionally, dual O-methyltransferase/FAD-dependent monooxygenase; part of the gene cluster that mediates the biosynthesis of elsinochrome C, a perelyenequinone phytotoxin structurally similar to cercosporin. The first step of elsinochrome C biosynthesis is performed by the polyketide synthase elcA which catalyzes the formation of nor-toralactone. The starter unit acyltransferase (SAT) domain of elcA initiates polyketide extension by the selective utilization of acetyl-CoA, which is elongated to the heptaketide in the beta-ketoacyl synthase (KS) domain by successive condensations with six malonyl units introduced by the malonyl acyltransferase (MAT) domain. The product template (PT) domain catalyzes C4-C9 and C2-C11 aldol cyclizations and dehydrations to a trihydroxynaphthalene, which is thought to be delivered to the thioesterase (TE) domain for product release. The bifunctional enzyme elcB then methylates nor-toralactone to toralactone before conducting an unusual oxidative aromatic ring opening. The next step in perylenequinone biosynthesis is an O-methylation at the nascent OH-6 of the elcB product performed by the O-methyltransferase elcD. The oxidative coupling of the two monomeric naphthol units in perylenequinone biosynthesis is catalyzed by the FAD-dependent monooxygenase elcE and the multicopper oxidase elcG. ElcG might catalyze the first intermolecular coupling in a regio- and stereo-selective manner via a phenol radical coupling mechanism and the elcE could forge the second C-C bond intramolecularly via a hydride transfer mechanism. The fasciclin domain-containing protein elcF might also play a role duting this step. The last piece of the puzzle in the biosynthesis of elsinochrome C is the additional annulation by enolate coupling to afford the dihydrobenzo(ghi)perylenequinone system, catalyzed by the FAD-dependent monooxygenase elcH. The polypeptide is Dual O-methyltransferase/FAD-dependent monooxygenase elcB (Phaeosphaeria nodorum (strain SN15 / ATCC MYA-4574 / FGSC 10173) (Glume blotch fungus)).